The sequence spans 414 residues: 3-oxoacyl-[acyl-carrier-protein] synthase 2 (414 aa).

The region spanning 3 to 413 (KRRVVVTGMG…GTNGSLIFKR (411 aa)) is the Ketosynthase family 3 (KS3) domain. Residues Cys-164, His-304, and His-342 each act as for beta-ketoacyl synthase activity in the active site.

This sequence belongs to the thiolase-like superfamily. Beta-ketoacyl-ACP synthases family. In terms of assembly, homodimer.

It catalyses the reaction a fatty acyl-[ACP] + malonyl-[ACP] + H(+) = a 3-oxoacyl-[ACP] + holo-[ACP] + CO2. The catalysed reaction is (9Z)-hexadecenoyl-[ACP] + malonyl-[ACP] + H(+) = 3-oxo-(11Z)-octadecenoyl-[ACP] + holo-[ACP] + CO2. It functions in the pathway lipid metabolism; fatty acid biosynthesis. Involved in the type II fatty acid elongation cycle. Catalyzes the elongation of a wide range of acyl-ACP by the addition of two carbons from malonyl-ACP to an acyl acceptor. Can efficiently catalyze the conversion of palmitoleoyl-ACP (cis-hexadec-9-enoyl-ACP) to cis-vaccenoyl-ACP (cis-octadec-11-enoyl-ACP), an essential step in the thermal regulation of fatty acid composition. The protein is 3-oxoacyl-[acyl-carrier-protein] synthase 2 (fabF) of Vibrio cholerae serotype O1 (strain ATCC 39315 / El Tor Inaba N16961).